The sequence spans 431 residues: Inactive polypeptide N-acetylgalactosaminyltransferase-like protein 5 (431 aa).

Residues Met-1–Val-4 lie on the Cytoplasmic side of the membrane. A helical; Signal-anchor for type II membrane protein membrane pass occupies residues Ile-5 to Leu-27. Residues His-28–Phe-431 are Lumenal-facing. Residue Asn-68 is glycosylated (N-linked (GlcNAc...) asparagine). 2 disulfide bridges follow: Cys-105-Cys-336 and Cys-327-Cys-403. The tract at residues Leu-114 to Ala-224 is catalytic subdomain A. The catalytic subdomain B stretch occupies residues Pro-282–Lys-344. N-linked (GlcNAc...) asparagine glycans are attached at residues Asn-353 and Asn-390.

This sequence belongs to the glycosyltransferase 2 family. GalNAc-T subfamily. The cofactor is Mn(2+). In terms of tissue distribution, expressed in testis. Mainly expressed in the round and elongated spermatids during spermiogenesis, not in the outermost cells of the seminiferous tubules, which contain spermatogonia and somatic Sertoli cells. Present in the juxtanuclear space in the round spermatids, not in the acrosomal vesicles. In the elongating spermatids, localizes strongly in the acroplaxome, the region between the developing acrosome and nucleus. During differentiation, also weakly detected in the transient manchette containing microtubules. In epididymal spermatozoa, weakly detected in the midpiece, but concentrates mainly in the neck region around the head-tail coupling apparatus (at protein level).

Its subcellular location is the late endosome membrane. Probable inactive glycosyltransferase required during spermatid development. May participate in protein loading into the acrosomes and accumulation of ubiquitin-proteasome systems around the head-tail coupling apparatus region. This is Inactive polypeptide N-acetylgalactosaminyltransferase-like protein 5 (Galntl5) from Mus musculus (Mouse).